Here is a 199-residue protein sequence, read N- to C-terminus: DNA dC-&gt;dU-editing enzyme APOBEC-3A (199 aa).

The CMP/dCMP-type deaminase domain occupies 27–143 (GRHKTYLCYE…PLYKEALQML (117 aa)). H70 lines the Zn(2+) pocket. The Proton donor role is filled by E72. 2 residues coordinate Zn(2+): C101 and C106.

The protein belongs to the cytidine and deoxycytidylate deaminase family. In terms of assembly, interacts with AGO2. Interacts with TRIB3 (via N-terminus). Zn(2+) is required as a cofactor. As to expression, expressed in peripheral leukocytes with higher expression in CD14-positive phagocytic cells. Highly expressed in keratinocytes and in periphery blood monocytes. Also detected in non-lymphoid tissues including lung and adipose tissues. Found at high levels in colorectal adenocarcinoma, Burkitt's lymphoma and chronic myelogenous leukemia.

It is found in the nucleus. The protein localises to the cytoplasm. The catalysed reaction is a 2'-deoxycytidine in single-stranded DNA + H2O + H(+) = a 2'-deoxyuridine in single-stranded DNA + NH4(+). Functionally, DNA deaminase (cytidine deaminase) with restriction activity against viruses, foreign DNA and mobility of retrotransposons. Exhibits antiviral activity against adeno-associated virus (AAV) and human T-cell leukemia virus type 1 (HTLV-1) and may inhibit the mobility of LTR and non-LTR retrotransposons. Selectively targets single-stranded DNA and can deaminate both methylcytosine and cytosine in foreign DNA. Can induce somatic hypermutation in the nuclear and mitochondrial DNA. May also play a role in the epigenetic regulation of gene expression through the process of active DNA demethylation. The chain is DNA dC-&gt;dU-editing enzyme APOBEC-3A (APOBEC3A) from Homo sapiens (Human).